The primary structure comprises 1354 residues: Rho-associated protein kinase 1 (1354 aa).

Serine 2 carries the N-acetylserine modification. A Protein kinase domain is found at 76 to 338 (YEVVKVIGRG…VEEIKRHLFF (263 aa)). ATP-binding positions include 82–90 (IGRGAFGEV) and lysine 105. The Proton acceptor role is filled by aspartate 198. The 69-residue stretch at 341–409 (DQWAWETLRD…YSNRRYLPSA (69 aa)) folds into the AGC-kinase C-terminal domain. An interaction with FHOD1 region spans residues 368-727 (FDDLEEDKGD…KKLKEEREAR (360 aa)). Residues 422–692 (KSLQESLQKT…RLEQEVNEHK (271 aa)) are a coiled coil. Residues 479–556 (SAVSQIEKEK…LEEANDLLRT (78 aa)) enclose the REM-1 domain. The interval 707–946 (EAKSVAMCEM…TVSRLEETNS (240 aa)) is SHROOM3 binding. The region spanning 949-1015 (TKDIEMLRKE…LAEIMNRKDF (67 aa)) is the RhoBD domain. The segment at 998–1010 (LKTQAVNKLAEIM) is RHOA binding. The stretch at 1011–1102 (NRKDFKIDRK…KLLDLSDSTS (92 aa)) forms a coiled coil. A phosphoserine mark is found at serine 1105 and serine 1108. The auto-inhibitory stretch occupies residues 1115–1354 (NLPESRIEGW…VVKNTSGKTS (240 aa)). Positions 1118–1317 (ESRIEGWLSV…WVTHLVKKIP (200 aa)) constitute a PH domain. The segment at 1228–1283 (GHEFIPTLYHFPANCEACAKPLWHVFKPPPALECRRCHVKCHRDHLDKKEDLISPC) adopts a Phorbol-ester/DAG-type zinc-finger fold. At serine 1328 the chain carries Phosphoserine. Residues 1333–1354 (STRSTANQSFRKVVKNTSGKTS) form a disordered region.

It belongs to the protein kinase superfamily. AGC Ser/Thr protein kinase family. Homodimer. Interacts with RHOA (activated by GTP), RHOB, RHOC, GEM, MYLC2B, RHOE, PPP1R12A, LIMK1, LIMK2, TSG101, CHORDC1, DAPK3, PFN1 and JIP3. Interacts with FHOD1 in a Src-dependent manner. Interacts with PTEN. Interacts with ITGB1BP1 (via N-terminus and PTB domain). Interacts with SHROOM3. Mg(2+) is required as a cofactor. Autophosphorylated on serine and threonine residues. Post-translationally, cleaved by caspase-3 during apoptosis. This leads to constitutive activation of the kinase and membrane blebbing. In terms of tissue distribution, highly expressed in brain, heart, lung, liver, stomach, spleen, kidney, testis, muscle, embryo and placenta.

It is found in the cytoplasm. Its subcellular location is the cytoskeleton. It localises to the microtubule organizing center. The protein localises to the centrosome. The protein resides in the centriole. It is found in the golgi apparatus membrane. Its subcellular location is the cell projection. It localises to the bleb. The protein localises to the cell membrane. The protein resides in the lamellipodium. It is found in the ruffle. It carries out the reaction L-seryl-[protein] + ATP = O-phospho-L-seryl-[protein] + ADP + H(+). The catalysed reaction is L-threonyl-[protein] + ATP = O-phospho-L-threonyl-[protein] + ADP + H(+). Activated by RHOA binding. Inhibited by Y-27632. In terms of biological role, protein kinase which is a key regulator of the actin cytoskeleton and cell polarity. Involved in regulation of smooth muscle contraction, actin cytoskeleton organization, stress fiber and focal adhesion formation, neurite retraction, cell adhesion and motility via phosphorylation of DAPK3, GFAP, LIMK1, LIMK2, MYL9/MLC2, TPPP, PFN1 and PPP1R12A. Phosphorylates FHOD1 and acts synergistically with it to promote SRC-dependent non-apoptotic plasma membrane blebbing. Phosphorylates JIP3 and regulates the recruitment of JNK to JIP3 upon UVB-induced stress. Acts as a suppressor of inflammatory cell migration by regulating PTEN phosphorylation and stability. Acts as a negative regulator of VEGF-induced angiogenic endothelial cell activation. Required for centrosome positioning and centrosome-dependent exit from mitosis. Plays a role in terminal erythroid differentiation. Inhibits podocyte motility via regulation of actin cytoskeletal dynamics and phosphorylation of CFL1. Promotes keratinocyte terminal differentiation. Involved in osteoblast compaction through the fibronectin fibrillogenesis cell-mediated matrix assembly process, essential for osteoblast mineralization. May regulate closure of the eyelids and ventral body wall by inducing the assembly of actomyosin bundles. The chain is Rho-associated protein kinase 1 (Rock1) from Mus musculus (Mouse).